A 576-amino-acid chain; its full sequence is Septation ring formation regulator EzrA (576 aa).

Residues 1 to 7 are Extracellular-facing; the sequence is MSSTVII. Residues 8 to 26 form a helical membrane-spanning segment; sequence LIVVLLVILVAFYAFAILM. Over 27–576 the chain is Cytoplasmic; the sequence is RKKTEDRILA…FKNKPTPDYL (550 aa). 3 coiled-coil regions span residues 105–134, 254–305, and 356–402; these read RARE…VAQL, ENVN…FERE, and GYQE…IEKN.

Belongs to the EzrA family.

It is found in the cell membrane. In terms of biological role, negative regulator of FtsZ ring formation; modulates the frequency and position of FtsZ ring formation. Inhibits FtsZ ring formation at polar sites. Interacts either with FtsZ or with one of its binding partners to promote depolymerization. This chain is Septation ring formation regulator EzrA, found in Lactococcus lactis subsp. cremoris (strain MG1363).